Consider the following 546-residue polypeptide: CTP synthase (546 aa).

The tract at residues 1–269 (MADTKYIFVT…DKVTLKKLAL (269 aa)) is amidoligase domain. S15 is a binding site for CTP. S15 is a UTP binding site. An ATP-binding site is contributed by 16-21 (SLGKGI). Y56 provides a ligand contact to L-glutamine. D73 serves as a coordination point for ATP. Mg(2+)-binding residues include D73 and E143. CTP contacts are provided by residues 150-152 (DIE), 190-195 (KTKPTQ), and K226. UTP contacts are provided by residues 190-195 (KTKPTQ) and K226. In terms of domain architecture, Glutamine amidotransferase type-1 spans 295–537 (HIGLIGKYVE…VKAAHEHSVK (243 aa)). G357 lines the L-glutamine pocket. C384 serves as the catalytic Nucleophile; for glutamine hydrolysis. L-glutamine-binding positions include 385-388 (LGMQ), E408, and R465. Active-site residues include H510 and E512.

The protein belongs to the CTP synthase family. In terms of assembly, homotetramer.

The catalysed reaction is UTP + L-glutamine + ATP + H2O = CTP + L-glutamate + ADP + phosphate + 2 H(+). It catalyses the reaction L-glutamine + H2O = L-glutamate + NH4(+). The enzyme catalyses UTP + NH4(+) + ATP = CTP + ADP + phosphate + 2 H(+). Its pathway is pyrimidine metabolism; CTP biosynthesis via de novo pathway; CTP from UDP: step 2/2. With respect to regulation, allosterically activated by GTP, when glutamine is the substrate; GTP has no effect on the reaction when ammonia is the substrate. The allosteric effector GTP functions by stabilizing the protein conformation that binds the tetrahedral intermediate(s) formed during glutamine hydrolysis. Inhibited by the product CTP, via allosteric rather than competitive inhibition. Catalyzes the ATP-dependent amination of UTP to CTP with either L-glutamine or ammonia as the source of nitrogen. Regulates intracellular CTP levels through interactions with the four ribonucleotide triphosphates. The chain is CTP synthase from Christiangramia forsetii (strain DSM 17595 / CGMCC 1.15422 / KT0803) (Gramella forsetii).